Reading from the N-terminus, the 73-residue chain is Protein SlyX homolog (73 aa).

Belongs to the SlyX family.

The polypeptide is Protein SlyX homolog (Haemophilus influenzae (strain PittEE)).